The primary structure comprises 378 residues: 3-hydroxyisobutyryl-CoA hydrolase 1 (378 aa).

Ala-2 bears the N-acetylalanine mark. The substrate site is built by Glu-94, Gly-119, Glu-142, and Asp-150.

Belongs to the enoyl-CoA hydratase/isomerase family. Expressed in roots, leaves, flowers and siliques.

It localises to the peroxisome. It carries out the reaction 3-hydroxy-2-methylpropanoyl-CoA + H2O = 3-hydroxy-2-methylpropanoate + CoA + H(+). It functions in the pathway amino-acid degradation; L-valine degradation. With respect to regulation, inhibited by copper. Its function is as follows. Involved in valine catabolism. May be indirectly involved in benzoic acid biosynthesis and in cold signaling and cold tolerance. This Arabidopsis thaliana (Mouse-ear cress) protein is 3-hydroxyisobutyryl-CoA hydrolase 1 (CHY1).